Here is a 517-residue protein sequence, read N- to C-terminus: Rop guanine nucleotide exchange factor 9 (517 aa).

Disordered regions lie at residues Asn-16–Glu-76 and Gly-428–His-517. Polar residues predominate over residues Met-39–Leu-63. One can recognise a PRONE domain in the interval Ser-65 to Glu-429. A compositionally biased stretch (basic and acidic residues) spans Arg-66–Glu-76. Positions Glu-440–Ser-452 are enriched in polar residues.

Interacts with ARAC11/ROP1 and ARAC10/ROP11. Interacts with PRK6. In terms of tissue distribution, expressed in pollen grains and pollen tubes.

The protein resides in the cell membrane. Functionally, guanine-nucleotide exchange factor (GEF) that acts as an activator of Rop (Rho of plants) GTPases by promoting the exchange of GDP for GTP. This chain is Rop guanine nucleotide exchange factor 9, found in Arabidopsis thaliana (Mouse-ear cress).